Consider the following 77-residue polypeptide: P fimbrial regulatory protein KS71A (77 aa).

This chain is P fimbrial regulatory protein KS71A (KS71A), found in Escherichia coli.